Consider the following 862-residue polypeptide: Interleukin-12 receptor subunit beta-2 (862 aa).

The first 23 residues, 1 to 23 (MAHTFRGCSLAFMFIITWLLIKA), serve as a signal peptide directing secretion. Over 24-622 (KIDACKRGDV…REFCLQGKAN (599 aa)) the chain is Extracellular. N48, N129, N166, N195, and N271 each carry an N-linked (GlcNAc...) asparagine glycan. Fibronectin type-III domains are found at residues 126–221 (QPQN…FLDI), 226–319 (PPWD…TPEE), 320–419 (EPTG…LCEA), 423–520 (APRQ…KHKA), and 521–620 (PLSG…LQGK). A WSXWS motif motif is present at residues 305 to 309 (WSDWS). 3 N-linked (GlcNAc...) asparagine glycosylation sites follow: N347, N376, and N480. The helical transmembrane segment at 623–643 (WMAFVAPSICIAIIMVGIFST) threads the bilayer. The Cytoplasmic portion of the chain corresponds to 644–862 (HYFQQKVFVL…LKMRCDSLML (219 aa)). Positions 662–670 (CSREIPDPA) match the Box 1 motif motif. Residues 725-755 (NWPQREKGIQGHQASEKDMMHSASSPPPPRA) are disordered. Over residues 728–744 (QREKGIQGHQASEKDMM) the composition is skewed to basic and acidic residues. The segment at 796–801 (THDGYL) is required for STAT4 binding. At Y800 the chain carries Phosphotyrosine.

The protein belongs to the type I cytokine receptor family. Type 2 subfamily. Heterodimer/heterooligomer; disulfide-linked. The functional high affinity IL12 receptor is composed of I12RB1 and IL12RB2. Il12RB2 binds JAK2 (via its N-terminal) through a membrane-proximal region of the cytoplasmic domain. Interaction, in vitro and in vivo, with SOCS3 (via its SH2 domain) inhibits the STAT4-mediated activation. Binds STAT4 through a membrane-distal C-terminal region. Post-translationally, on IL12 binding, phosphorylated on C-terminal tyrosine residues by JAK2. Phosphorylation on Tyr-800 is required for STAT4 binding and activation, and for SOCS3 binding. In terms of tissue distribution, isoform 2 is expressed at similar levels in both naive and activated T-cells.

The protein localises to the membrane. In terms of biological role, receptor for interleukin-12. This subunit is the signaling component coupling to the JAK2/STAT4 pathway. Promotes the proliferation of T-cells as well as NK cells. Induces the promotion of T-cells towards the Th1 phenotype by strongly enhancing IFN-gamma production. This Homo sapiens (Human) protein is Interleukin-12 receptor subunit beta-2 (IL12RB2).